Here is a 411-residue protein sequence, read N- to C-terminus: Serine hydroxymethyltransferase (411 aa).

Residues L117 and 121 to 123 each bind (6S)-5,6,7,8-tetrahydrofolate; that span reads GHL. K226 is modified (N6-(pyridoxal phosphate)lysine). (6S)-5,6,7,8-tetrahydrofolate contacts are provided by residues E241 and 349–351; that span reads SPF.

This sequence belongs to the SHMT family. As to quaternary structure, homodimer. The cofactor is pyridoxal 5'-phosphate.

It localises to the cytoplasm. The enzyme catalyses (6R)-5,10-methylene-5,6,7,8-tetrahydrofolate + glycine + H2O = (6S)-5,6,7,8-tetrahydrofolate + L-serine. The protein operates within one-carbon metabolism; tetrahydrofolate interconversion. It functions in the pathway amino-acid biosynthesis; glycine biosynthesis; glycine from L-serine: step 1/1. Functionally, catalyzes the reversible interconversion of serine and glycine with tetrahydrofolate (THF) serving as the one-carbon carrier. This reaction serves as the major source of one-carbon groups required for the biosynthesis of purines, thymidylate, methionine, and other important biomolecules. Also exhibits THF-independent aldolase activity toward beta-hydroxyamino acids, producing glycine and aldehydes, via a retro-aldol mechanism. The protein is Serine hydroxymethyltransferase of Oceanobacillus iheyensis (strain DSM 14371 / CIP 107618 / JCM 11309 / KCTC 3954 / HTE831).